The primary structure comprises 305 residues: Oxidoreductase swnR (305 aa).

Belongs to the NmrA-type oxidoreductase family. Isoflavone reductase subfamily.

It carries out the reaction L-pipecolate + O2 = L-1-piperideine-6-carboxylate + H2O2 + H(+). The protein operates within mycotoxin biosynthesis. Functionally, oxidoreductase; part of the gene cluster that mediates the biosynthesis of swainsonine (SW), a cytotoxic fungal alkaloid and a potential cancer therapy drug. Swainsonine production occurs via a multibranched pathway and is dispensable for fungal colonization of plants and infection of insect hosts. The first step of swainsonine biosynthesis is the production of the precursor pipecolic acid (PA) via conversion of L-lysine (Lys) to 1-piperideine-6-carboxylate (P6C) by the aminotransferase swnA, the latter being further reduced to PA by the reductase swnR. The PKS-NRPS hybrid synthetase swnK uptakes and condensates PA and malonyl-CoA with and without skipping of the ketoreductase (KR) domain in order to produce 3 intermediates, 1-oxoindolizidine, (1S)-1-hydroxyindolizin, and (1R)-1-hydroxyindolizine; with the transisomer (1S)-1-hydroxyindolizin being predominant. The terminal thioester reductase (TE) domain of swnK is involved in reduction of the thioester bond to release the intermediate aldehydes. The oxidoreductase swnN could contribute to the reduction of 1-oxoindolizidine to (1S)-1-hydroxyindolizin and (1R)-1-hydroxyindolizine, contributing to the major route of SW production. The dioxygenase swnH2 would be responsible for the oxidization of (1R)-1-hydroxyindolizine into (1R,2S)-1,2-dihydroxyindolizine and of (1S)-1-hydroxyindolizin to yield both (1R,2S)-1,2-dihydroxyindolizine and (1S,2S)-1,2-dihydroxyindolizine. The dioxygenase swnH1 then performs the conversion of the 1,2-dihydroxyindolizine epimers to SW. The chain is Oxidoreductase swnR from Arthroderma benhamiae (strain ATCC MYA-4681 / CBS 112371) (Trichophyton mentagrophytes).